A 154-amino-acid chain; its full sequence is Large ribosomal subunit protein uL13 (154 aa).

Residues 131-154 (DHKHEAQQPEVVDFKSMNSKNTRG) are disordered.

Belongs to the universal ribosomal protein uL13 family. In terms of assembly, part of the 50S ribosomal subunit.

This protein is one of the early assembly proteins of the 50S ribosomal subunit, although it is not seen to bind rRNA by itself. It is important during the early stages of 50S assembly. The polypeptide is Large ribosomal subunit protein uL13 (Maricaulis maris (strain MCS10) (Caulobacter maris)).